Reading from the N-terminus, the 104-residue chain is Nucleoid-associated protein Ccon26_18480 (104 aa).

The span at 16-34 (DVQKQAKQMEEESKNKEFG) shows a compositional bias: basic and acidic residues. The disordered stretch occupies residues 16–38 (DVQKQAKQMEEESKNKEFGAKSG).

Belongs to the YbaB/EbfC family. Homodimer.

It localises to the cytoplasm. The protein localises to the nucleoid. Functionally, binds to DNA and alters its conformation. May be involved in regulation of gene expression, nucleoid organization and DNA protection. The chain is Nucleoid-associated protein Ccon26_18480 from Campylobacter concisus (strain 13826).